Reading from the N-terminus, the 737-residue chain is Serine/threonine-protein kinase dst1 (737 aa).

One can recognise a Protein kinase domain in the interval 29-281 (YHIQERLGKG…AKELLNHEFI (253 aa)). ATP is bound by residues 35 to 43 (LGKGSFGQV) and lysine 58. Residue aspartate 149 is the Proton acceptor of the active site. Disordered regions lie at residues 305 to 356 (SMFE…SNNY), 372 to 475 (KDDA…TTDQ), 491 to 559 (KPIT…ISNN), and 575 to 631 (NNNI…ESLS). Composition is skewed to low complexity over residues 334–345 (NNNTVTNYSTVI), 401–410 (SSCSSSSSSS), 425–444 (PITNSPKISPISSNNINKIP), and 454–473 (ATTTTTTTTTTTTTAASTTT). The segment covering 491–503 (KPITSSNSTSVTP) has biased composition (polar residues). A compositionally biased stretch (low complexity) spans 510–525 (SNNTTTTSNINTPIKP). Polar residues-rich tracts occupy residues 529–554 (LKKSNSNTPVQLKTSGDKTPTTTPLK) and 585–596 (SPTTGQKIIKTN). The span at 597 to 615 (SGGVLKSSGGLSSKRSPSS) shows a compositional bias: low complexity.

The protein belongs to the protein kinase superfamily. STE Ser/Thr protein kinase family. STE20 subfamily. The cofactor is Mg(2+).

It catalyses the reaction L-seryl-[protein] + ATP = O-phospho-L-seryl-[protein] + ADP + H(+). The catalysed reaction is L-threonyl-[protein] + ATP = O-phospho-L-threonyl-[protein] + ADP + H(+). This chain is Serine/threonine-protein kinase dst1, found in Dictyostelium discoideum (Social amoeba).